The primary structure comprises 185 residues: MVLAKDLKSGMTFLNGEKLLRVMEASHHKPGKGNTIMRMKLKDVRSGSTFDDTYRPEDKFEQAVIETVTAQYLYSMDGIANFMNNETYEQYEIPVEQVKDELLYVLENTDVKIQFYGTEVIGIQLPTTVVLEVTETQPSIKGATVTGSGKPATMETGLVVNVPDFVEAGTKLEINTQTGEYLKRA.

The protein belongs to the elongation factor P family.

It is found in the cytoplasm. The protein operates within protein biosynthesis; polypeptide chain elongation. Functionally, involved in peptide bond synthesis. Stimulates efficient translation and peptide-bond synthesis on native or reconstituted 70S ribosomes in vitro. Probably functions indirectly by altering the affinity of the ribosome for aminoacyl-tRNA, thus increasing their reactivity as acceptors for peptidyl transferase. This chain is Elongation factor P (efp), found in Lactococcus lactis subsp. lactis (strain IL1403) (Streptococcus lactis).